Here is a 257-residue protein sequence, read N- to C-terminus: Imidazole glycerol phosphate synthase subunit HisF (257 aa).

Residues Asp12 and Asp131 contribute to the active site.

Belongs to the HisA/HisF family. Heterodimer of HisH and HisF.

The protein localises to the cytoplasm. The enzyme catalyses 5-[(5-phospho-1-deoxy-D-ribulos-1-ylimino)methylamino]-1-(5-phospho-beta-D-ribosyl)imidazole-4-carboxamide + L-glutamine = D-erythro-1-(imidazol-4-yl)glycerol 3-phosphate + 5-amino-1-(5-phospho-beta-D-ribosyl)imidazole-4-carboxamide + L-glutamate + H(+). It participates in amino-acid biosynthesis; L-histidine biosynthesis; L-histidine from 5-phospho-alpha-D-ribose 1-diphosphate: step 5/9. Its function is as follows. IGPS catalyzes the conversion of PRFAR and glutamine to IGP, AICAR and glutamate. The HisF subunit catalyzes the cyclization activity that produces IGP and AICAR from PRFAR using the ammonia provided by the HisH subunit. The sequence is that of Imidazole glycerol phosphate synthase subunit HisF from Nocardia farcinica (strain IFM 10152).